The following is a 376-amino-acid chain: Putative E3 ubiquitin-protein ligase XBAT34 (376 aa).

ANK repeat units follow at residues 41 to 71 (LGRT…NVNA) and 77 to 106 (NGGT…NPLV). The RING-type zinc-finger motif lies at 325–364 (CVICVDAPSEAVCVPCGHVAGCISCLKEIENKKMGCPVCR).

The catalysed reaction is S-ubiquitinyl-[E2 ubiquitin-conjugating enzyme]-L-cysteine + [acceptor protein]-L-lysine = [E2 ubiquitin-conjugating enzyme]-L-cysteine + N(6)-ubiquitinyl-[acceptor protein]-L-lysine.. It participates in protein modification; protein ubiquitination. In terms of biological role, no E3 ubiquitin-protein ligase activity observed when associated with the E2 enzyme UBC8 in vitro. The protein is Putative E3 ubiquitin-protein ligase XBAT34 (XBAT34) of Arabidopsis thaliana (Mouse-ear cress).